Here is a 1001-residue protein sequence, read N- to C-terminus: Non-canonical poly(A) RNA polymerase protein Trf4-1 (1001 aa).

Low complexity-rich tracts occupy residues 44 to 86 and 127 to 163; these read TING…NNSS and RNSTNINTTSGGSTSSSADSTTNRDNNSPANSSSTNG. Disordered stretches follow at residues 44–92 and 115–238; these read TING…PYLS and QQQQ…AGGA. Residues 164 to 178 are compositionally biased toward gly residues; the sequence is PGAGTGTSTGAGGTG. Positions 179 to 216 are enriched in low complexity; sequence TNSPATTASSTAATTTGPATSMSDTSNNPPQSTTTPAS. Residues aspartate 328 and aspartate 330 each coordinate Mn(2+). In terms of domain architecture, PAP-associated spans 458–517; it reads NLGVLLLEFFELYGRRFNYMKIGISIKNGGRYMPKDELQRDMVDGHRPSLLCIEDPLTPG. Disordered regions lie at residues 631–652, 687–740, 767–963, and 977–1001; these read PTAHGHSHAHSHSHGHAHPGAH, QQQQ…AQEV, ASNS…LRGT, and SSESSIASSSSSSSRSGQDQQRDER. The segment covering 635-649 has biased composition (basic residues); that stretch reads GHSHAHSHSHGHAHP. Composition is skewed to low complexity over residues 687-708 and 768-788; these read QQQQQNATAHTHSQQQTQNQSQ and SNSWSGNGNGNGNSSSSTGSS. Over residues 827–841 the composition is skewed to gly residues; the sequence is VGTGSNRGGGDGSGG. Residues 844-854 show a composition bias toward polar residues; the sequence is YNQRNNHNSSG. A compositionally biased stretch (low complexity) spans 855 to 880; the sequence is YYHQQYYVPPPMQQQLSKSNSSSNYH. Basic residues predominate over residues 881-912; sequence QQHHHSHSHGNHSHRQQHHHQQQHHHQQRPQH. Low complexity-rich tracts occupy residues 932 to 955 and 977 to 992; these read SAGNASNSSSNCSNSSSSSGSNNS and SSESSIASSSSSSSRS.

This sequence belongs to the DNA polymerase type-B-like family. It depends on Mn(2+) as a cofactor.

Its subcellular location is the cytoplasm. The enzyme catalyses RNA(n) + ATP = RNA(n)-3'-adenine ribonucleotide + diphosphate. In terms of biological role, involved in a post-transcriptional quality control mechanism limiting inappropriate expression of genetic information. Polyadenylation is required for the degradative activity of the exosome on several of its nuclear RNA substrates. Polyadenylates RNA processing and degradation intermediates of snRNAs and mRNAs. In Drosophila melanogaster (Fruit fly), this protein is Non-canonical poly(A) RNA polymerase protein Trf4-1.